Here is a 548-residue protein sequence, read N- to C-terminus: Synaptic vesicle 2-related protein (548 aa).

Residues 1-87 lie on the Cytoplasmic side of the membrane; it reads MEEDLFQLRQ…GFGRFQWKLS (87 aa). Phosphoserine is present on residues Ser25 and Ser31. Residues 88–108 traverse the membrane as a helical segment; that stretch reads VLTGLAWMADAMEMMILSILA. The Vesicular segment spans residues 109 to 122; sequence PQLHCEWRLPSWQV. Residues 123 to 143 traverse the membrane as a helical segment; it reads ALLTSVVFIGMMSSSTLWGNI. Over 144–156 the chain is Cytoplasmic; that stretch reads SDQYGRKTGLKIS. Residues 157-177 traverse the membrane as a helical segment; that stretch reads VFWTLYYGILSAFAPVYSWIL. The Vesicular portion of the chain corresponds to 178–180; the sequence is VLR. Residues 181 to 201 traverse the membrane as a helical segment; the sequence is GLVGFGIGGVPQSVTLYAEFL. Topologically, residues 202-209 are cytoplasmic; it reads PMKARAKC. The helical transmembrane segment at 210–230 threads the bilayer; it reads ILLIEVFWAIGTVFEVLLAVF. The Vesicular portion of the chain corresponds to 231–238; it reads VMPSLGWR. A helical transmembrane segment spans residues 239 to 259; it reads WLLLLSAAPLLVFAVLCFWLP. Residues 260–316 are Cytoplasmic-facing; that stretch reads ESARYDVLSGNQEKAIATLKRIATENGAPMPLGKLIISRQEDRGKMRDLFTPHFRWT. The chain crosses the membrane as a helical span at residues 317-337; that stretch reads TLLLWFIWFSNAFSYYGLVLL. At 338 to 373 the chain is on the vesicular side; the sequence is TTELFQAGDVCSISSRKKAVEAKCSLACEYLSKEDY. A helical transmembrane segment spans residues 374–394; the sequence is MDLLWTTLSEFPGVLVTLWVI. Residues 395 to 401 are Cytoplasmic-facing; that stretch reads DRLGRKK. Residues 402 to 422 traverse the membrane as a helical segment; that stretch reads TMALCFVIFSLCSLLLFICIG. Topologically, residues 423–424 are vesicular; it reads RN. Residues 425–445 traverse the membrane as a helical segment; it reads VLTLLLFIARAFISGGFQAAY. Topologically, residues 446 to 457 are cytoplasmic; it reads VYTPEVYPTATR. The helical transmembrane segment at 458–478 threads the bilayer; the sequence is ALGLGTCSGMARVGALITPFI. Topologically, residues 479-489 are vesicular; that stretch reads AQVMLESSVYL. Residues 490 to 510 traverse the membrane as a helical segment; the sequence is TLAVYSGCCLLAALASCFLPI. Residues 511-548 lie on the Cytoplasmic side of the membrane; sequence ETKGRALQESSHREWGQEMVGRGTNSTGVPRSNSGSQE. The tract at residues 523-548 is disordered; the sequence is REWGQEMVGRGTNSTGVPRSNSGSQE. Positions 533–548 are enriched in polar residues; sequence GTNSTGVPRSNSGSQE. Ser542 is subject to Phosphoserine.

The protein belongs to the major facilitator superfamily. As to expression, detected in brain (at protein level). Detected in brain, in synaptic layers of the cerebellum, hippocampus and cerebral cortex.

The protein resides in the cytoplasmic vesicle. The protein localises to the secretory vesicle. It is found in the synaptic vesicle membrane. This Rattus norvegicus (Rat) protein is Synaptic vesicle 2-related protein (Svop).